Reading from the N-terminus, the 305-residue chain is MQKPDLSVEIAGITLRNPVMTASGTFGYGEEFSEYVNLEAIGAIITKGLSLKPKAGNPTPRIVETTGGMLNAIGLQNVGIDAFVEKKVPFLRTVATPVIVNFFGNTLEEYAELAERLDLIPEVAAVEINISCPNVKHGGIVFGTDPKAAYSVVKAVREATIKPVIVKLSPNVTDIVEMAWACADAEADALSLINTLTGMAIDLDKRRPILANVTGGLSGPAVKPIALRMVWQVARAVKIPVIGIGGIMTGIDALEFMLAGATAVQVGTANFLDPGAAGRIAAEMERYLADNGIADVKEMIGALEV.

Residues Ser-23 and Lys-47–Gly-48 each bind FMN. Substrate-binding positions include Lys-47 and Asn-71–Leu-75. The FMN site is built by Asn-101 and Asn-129. Asn-129 serves as a coordination point for substrate. Cys-132 serves as the catalytic Nucleophile. FMN-binding residues include Lys-167 and Ile-193. Asn-194–Thr-195 contacts substrate. FMN-binding positions include Gly-219, Gly-245–Gly-246, and Gly-267–Thr-268.

This sequence belongs to the dihydroorotate dehydrogenase family. Type 1 subfamily. Heterotetramer of 2 PyrK and 2 PyrD type B subunits. Requires FMN as cofactor.

Its subcellular location is the cytoplasm. The enzyme catalyses (S)-dihydroorotate + NAD(+) = orotate + NADH + H(+). The protein operates within pyrimidine metabolism; UMP biosynthesis via de novo pathway; orotate from (S)-dihydroorotate (NAD(+) route): step 1/1. In terms of biological role, catalyzes the conversion of dihydroorotate to orotate with NAD(+) as electron acceptor. The sequence is that of Dihydroorotate dehydrogenase B (NAD(+)), catalytic subunit (pyrD) from Geobacter sulfurreducens (strain ATCC 51573 / DSM 12127 / PCA).